The sequence spans 823 residues: Probable inorganic carbon transporter subunit DabA (823 aa).

Residues Cys-361, Asp-363, His-527, and Cys-542 each contribute to the Zn(2+) site.

Belongs to the inorganic carbon transporter (TC 9.A.2) DabA family. In terms of assembly, forms a complex with DabB. Zn(2+) serves as cofactor.

It localises to the cell inner membrane. Its activity is regulated as follows. Intracellular DIC accumulation is sensitive to CCCP (carbonyl cyanide-m-chlorophenylhydrazone) and DCCD (N,N-dicyclohexylcarbodiimide) and therefore likely driven by either proton potential, ATP, or both. Part of an energy-coupled inorganic carbon pump. Its function is as follows. Probably involved in transport of dissolved inorganic carbon (DIC) with upstream gene dabB (Tcr_0853); has been suggested to be a proton-DIC symporter. The sequence is that of Probable inorganic carbon transporter subunit DabA from Hydrogenovibrio crunogenus (strain DSM 25203 / XCL-2) (Thiomicrospira crunogena).